Consider the following 550-residue polypeptide: Putative pentatricopeptide repeat-containing protein At5g37570 (550 aa).

PPR repeat units follow at residues 73-107 (GTYL…GLAR), 109-143 (DEYT…GFDK), 144-174 (DVVV…MPER), 175-205 (NAVS…MPER), 206-240 (NLGS…DIIS), 241-267 (YTSM…ARGV), 268-302 (DVRA…NVKP), 303-333 (DEFI…LHQR), 339-369 (SHYV…MPQR), 370-404 (DLVS…GIVP), 405-435 (DEVA…MRKK), and 441-475 (SPDH…AHAS). Positions 476 to 550 (AWGSLLGGCS…KICGRSWISR (75 aa)) are type E motif.

Belongs to the PPR family. PCMP-E subfamily.

The protein is Putative pentatricopeptide repeat-containing protein At5g37570 (PCMP-E37) of Arabidopsis thaliana (Mouse-ear cress).